The chain runs to 443 residues: NADH-quinone oxidoreductase subunit D 1 (443 aa).

Belongs to the complex I 49 kDa subunit family. In terms of assembly, NDH-1 is composed of 14 different subunits. Subunits NuoB, C, D, E, F, and G constitute the peripheral sector of the complex.

The protein resides in the cell membrane. It carries out the reaction a quinone + NADH + 5 H(+)(in) = a quinol + NAD(+) + 4 H(+)(out). NDH-1 shuttles electrons from NADH, via FMN and iron-sulfur (Fe-S) centers, to quinones in the respiratory chain. The immediate electron acceptor for the enzyme in this species is believed to be a menaquinone. Couples the redox reaction to proton translocation (for every two electrons transferred, four hydrogen ions are translocated across the cytoplasmic membrane), and thus conserves the redox energy in a proton gradient. The chain is NADH-quinone oxidoreductase subunit D 1 from Streptomyces avermitilis (strain ATCC 31267 / DSM 46492 / JCM 5070 / NBRC 14893 / NCIMB 12804 / NRRL 8165 / MA-4680).